Consider the following 150-residue polypeptide: 3-hydroxyacyl-[acyl-carrier-protein] dehydratase FabZ (150 aa).

The active site involves H53.

It belongs to the thioester dehydratase family. FabZ subfamily.

The protein localises to the cytoplasm. The enzyme catalyses a (3R)-hydroxyacyl-[ACP] = a (2E)-enoyl-[ACP] + H2O. In terms of biological role, involved in unsaturated fatty acids biosynthesis. Catalyzes the dehydration of short chain beta-hydroxyacyl-ACPs and long chain saturated and unsaturated beta-hydroxyacyl-ACPs. The sequence is that of 3-hydroxyacyl-[acyl-carrier-protein] dehydratase FabZ from Photorhabdus laumondii subsp. laumondii (strain DSM 15139 / CIP 105565 / TT01) (Photorhabdus luminescens subsp. laumondii).